Reading from the N-terminus, the 362-residue chain is Phosphoserine aminotransferase (362 aa).

Positions 9 and 42 each coordinate L-glutamate. Pyridoxal 5'-phosphate is bound by residues 76–77, tryptophan 102, threonine 153, aspartate 174, and glutamine 197; that span reads GR. An N6-(pyridoxal phosphate)lysine modification is found at lysine 198. 239–240 lines the pyridoxal 5'-phosphate pocket; sequence NT.

It belongs to the class-V pyridoxal-phosphate-dependent aminotransferase family. SerC subfamily. In terms of assembly, homodimer. The cofactor is pyridoxal 5'-phosphate.

It is found in the cytoplasm. It catalyses the reaction O-phospho-L-serine + 2-oxoglutarate = 3-phosphooxypyruvate + L-glutamate. It carries out the reaction 4-(phosphooxy)-L-threonine + 2-oxoglutarate = (R)-3-hydroxy-2-oxo-4-phosphooxybutanoate + L-glutamate. It functions in the pathway amino-acid biosynthesis; L-serine biosynthesis; L-serine from 3-phospho-D-glycerate: step 2/3. Its pathway is cofactor biosynthesis; pyridoxine 5'-phosphate biosynthesis; pyridoxine 5'-phosphate from D-erythrose 4-phosphate: step 3/5. Catalyzes the reversible conversion of 3-phosphohydroxypyruvate to phosphoserine and of 3-hydroxy-2-oxo-4-phosphonooxybutanoate to phosphohydroxythreonine. This Klebsiella pneumoniae subsp. pneumoniae (strain ATCC 700721 / MGH 78578) protein is Phosphoserine aminotransferase.